The following is a 248-amino-acid chain: Oligo(A)/oligo(T)-binding protein (248 aa).

A DNA-binding region spans residues 1-36 (MAKTLAQGRKPGSGRKPGKGKTLREGRKPGSGRRRR). Disordered regions lie at residues 1–127 (MAKT…LQQQ) and 219–248 (TAAS…NATI). 3 consecutive repeat copies span residues 8-12 (GRKPG), 14-18 (GRKPG), and 26-30 (GRKPG). A 3 X 5 AA repeats of G-R-K-P-G region spans residues 8-30 (GRKPGSGRKPGKGKTLREGRKPG). A compositionally biased stretch (basic residues) spans 12–21 (GSGRKPGKGK). A compositionally biased stretch (basic and acidic residues) spans 37–71 (QDTGGKETDGSQQDQESRLISSRDMEAVDALRELT). 2 stretches are compositionally biased toward low complexity: residues 72 to 100 (HSPS…LPPS) and 111 to 127 (QQQQ…LQQQ).

Binds as a dimer or higher oligomer.

DNA-binding protein that recognizes oligo(A).oligo(T) tracts (A.T DNA). Can bind to any 11 bp sequence in which 10 bases conform to an uninterrupted oligo(A).oligo(T) tract. This Saccharomyces cerevisiae (strain ATCC 204508 / S288c) (Baker's yeast) protein is Oligo(A)/oligo(T)-binding protein (DAT1).